The following is a 233-amino-acid chain: Biosynthetic peptidoglycan transglycosylase (233 aa).

A helical membrane pass occupies residues L4–L24.

It belongs to the glycosyltransferase 51 family.

The protein localises to the cell inner membrane. The catalysed reaction is [GlcNAc-(1-&gt;4)-Mur2Ac(oyl-L-Ala-gamma-D-Glu-L-Lys-D-Ala-D-Ala)](n)-di-trans,octa-cis-undecaprenyl diphosphate + beta-D-GlcNAc-(1-&gt;4)-Mur2Ac(oyl-L-Ala-gamma-D-Glu-L-Lys-D-Ala-D-Ala)-di-trans,octa-cis-undecaprenyl diphosphate = [GlcNAc-(1-&gt;4)-Mur2Ac(oyl-L-Ala-gamma-D-Glu-L-Lys-D-Ala-D-Ala)](n+1)-di-trans,octa-cis-undecaprenyl diphosphate + di-trans,octa-cis-undecaprenyl diphosphate + H(+). It functions in the pathway cell wall biogenesis; peptidoglycan biosynthesis. In terms of biological role, peptidoglycan polymerase that catalyzes glycan chain elongation from lipid-linked precursors. The chain is Biosynthetic peptidoglycan transglycosylase from Cupriavidus metallidurans (strain ATCC 43123 / DSM 2839 / NBRC 102507 / CH34) (Ralstonia metallidurans).